The following is a 314-amino-acid chain: Lysophospholipase D GDPD1 (314 aa).

Over 1 to 3 (MSS) the chain is Extracellular. A helical transmembrane segment spans residues 4–24 (TAAFYLLSTLGGYLVTSFLLL). Over 25-195 (KYPTLLHQRK…VEKCYKENSD (171 aa)) the chain is Cytoplasmic. Positions 40 to 309 (SKHISHRGGA…DYPTKLRDFL (270 aa)) constitute a GP-PDE domain. Residues Glu-72, Asp-74, and His-87 each coordinate a divalent metal cation. A helical membrane pass occupies residues 196 to 216 (IPILFSLQRVLLILGLFFTGL). At 217–314 (LPFVPIREQF…LRDFLHNFSA (98 aa)) the chain is on the extracellular side.

It belongs to the glycerophosphoryl diester phosphodiesterase family. In terms of tissue distribution, widely expressed with high expression level in testis.

The protein resides in the cytoplasm. It is found in the membrane. Its subcellular location is the perinuclear region. The protein localises to the endoplasmic reticulum. The catalysed reaction is a 1-O-alkyl-sn-glycero-3-phosphocholine + H2O = a 1-O-alkyl-sn-glycero-3-phosphate + choline + H(+). The enzyme catalyses 1-hexadecanoyl-sn-glycero-3-phosphocholine + H2O = 1-hexadecanoyl-sn-glycero-3-phosphate + choline + H(+). It carries out the reaction N-hexadecanoyl-sn-glycero-3-phosphoethanolamine + H2O = N-hexadecanoylethanolamine + sn-glycerol 3-phosphate + H(+). It catalyses the reaction N-(5Z,8Z,11Z,14Z-eicosatetraenoyl)-1-(9Z-octadecenoyl)-sn-glycero-3-phosphoethanolamine + H2O = N-(5Z,8Z,11Z,14Z-eicosatetraenoyl)-ethanolamine + 1-(9Z-octadecenoyl)-sn-glycero-3-phosphate + H(+). The catalysed reaction is N,1-di-(9Z-octadecenoyl)-sn-glycero-3-phosphoethanolamine + H2O = N-(9Z-octadecenoyl) ethanolamine + 1-(9Z-octadecenoyl)-sn-glycero-3-phosphate + H(+). The enzyme catalyses N-hexadecanoyl-1-(9Z-octadecenoyl)-sn-glycero-3-phosphoethanolamine + H2O = N-hexadecanoylethanolamine + 1-(9Z-octadecenoyl)-sn-glycero-3-phosphate + H(+). It carries out the reaction 1-O-(1Z-octadecenyl)-sn-glycero-3-phospho-N-hexadecanoyl-ethanolamine + H2O = 1-O-(1Z-octadecenyl)-sn-glycero-3-phosphate + N-hexadecanoylethanolamine + H(+). It catalyses the reaction 1-hexadecanoyl-sn-glycero-3-phosphoethanolamine + H2O = 1-hexadecanoyl-sn-glycero-3-phosphate + ethanolamine + H(+). The catalysed reaction is 1-O-hexadecyl-sn-glycero-3-phosphocholine + H2O = 1-O-hexadecyl-sn-glycero-3-phosphate + choline + H(+). The enzyme catalyses 1-(9Z-octadecenoyl)-sn-glycero-3-phosphocholine + H2O = 1-(9Z-octadecenoyl)-sn-glycero-3-phosphate + choline + H(+). It carries out the reaction N,1-dihexadecanoyl-sn-glycero-3-phosphoethanolamine + H2O = N-hexadecanoylethanolamine + 1-hexadecanoyl-sn-glycero-3-phosphate + H(+). It catalyses the reaction 1-O-(1Z-octadecenyl)-sn-glycero-3-phospho-(N-5Z,8Z,11Z,14Z-eicosatetraenoyl)-ethanolamine + H2O = 1-O-(1Z-octadecenyl)-sn-glycero-3-phosphate + N-(5Z,8Z,11Z,14Z-eicosatetraenoyl)-ethanolamine + H(+). The catalysed reaction is 1-O-(1Z-octadecenyl)-sn-glycero-3-phospho-(N-9Z-octadecenoyl)-ethanolamine + H2O = 1-O-(1Z-octadecenyl)-sn-glycero-3-phosphate + N-(9Z-octadecenoyl) ethanolamine + H(+). With respect to regulation, lysophospholipase D activity is increased by magnesium and manganese and inhibited by calcium in a concentration dependent manner. Loss of lysophospholipase D activity by addition of EDTA. In terms of biological role, hydrolyzes lysoglycerophospholipids to produce lysophosphatidic acid (LPA) and the corresponding amines. Shows a preference for 1-O-alkyl-sn-glycero-3-phosphocholine (lyso-PAF), lysophosphatidylethanolamine (lyso-PE) and lysophosphatidylcholine (lyso-PC). May be involved in bioactive N-acylethanolamine biosynthesis from both N-acyl-lysoplasmenylethanolamin (N-acyl-lysoPlsEt) and N-acyl-lysophosphatidylethanolamin (N-acyl-lysoPE). In addition, hydrolyzes glycerophospho-N-acylethanolamine to N-acylethanolamine. Does not display glycerophosphodiester phosphodiesterase activity, since it cannot hydrolyze either glycerophosphoinositol or glycerophosphocholine. This is Lysophospholipase D GDPD1 from Homo sapiens (Human).